The following is a 191-amino-acid chain: Adenylate kinase (191 aa).

12–17 (GSGKTT) serves as a coordination point for ATP. Residues 34–63 (STGDLLRAESAKKTERGLLIEKFTSQGELV) form an NMP region. AMP-binding positions include threonine 35, arginine 40, 61–63 (ELV), 88–91 (GYPR), and glutamine 95. Residues 130-136 (GRSRGAD) form an LID region. Residue arginine 131 coordinates ATP. Residues arginine 133 and arginine 145 each coordinate AMP. Arginine 173 serves as a coordination point for ATP.

It belongs to the adenylate kinase family. As to quaternary structure, monomer.

It is found in the cytoplasm. The catalysed reaction is AMP + ATP = 2 ADP. It functions in the pathway purine metabolism; AMP biosynthesis via salvage pathway; AMP from ADP: step 1/1. In terms of biological role, catalyzes the reversible transfer of the terminal phosphate group between ATP and AMP. Plays an important role in cellular energy homeostasis and in adenine nucleotide metabolism. This chain is Adenylate kinase, found in Helicobacter pylori (strain Shi470).